Reading from the N-terminus, the 579-residue chain is Sulfite reductase [NADPH] hemoprotein beta-component (579 aa).

Residues Cys434, Cys440, Cys479, and Cys483 each coordinate [4Fe-4S] cluster. Residue Cys483 coordinates siroheme.

Belongs to the nitrite and sulfite reductase 4Fe-4S domain family. In terms of assembly, alpha(8)-beta(8). The alpha component is a flavoprotein, the beta component is a hemoprotein. The cofactor is siroheme. [4Fe-4S] cluster serves as cofactor.

The enzyme catalyses hydrogen sulfide + 3 NADP(+) + 3 H2O = sulfite + 3 NADPH + 4 H(+). It functions in the pathway sulfur metabolism; hydrogen sulfide biosynthesis; hydrogen sulfide from sulfite (NADPH route): step 1/1. Component of the sulfite reductase complex that catalyzes the 6-electron reduction of sulfite to sulfide. This is one of several activities required for the biosynthesis of L-cysteine from sulfate. The protein is Sulfite reductase [NADPH] hemoprotein beta-component of Salmonella choleraesuis (strain SC-B67).